Consider the following 534-residue polypeptide: GPI transamidase component GPI17 (534 aa).

Over 1–8 (MSNANLRK) the chain is Cytoplasmic. The chain crosses the membrane as a helical span at residues 9 to 29 (WVGFCFVAIYLFLGVPLWYKL). At 30-472 (TTVYRASLPI…VQQNFFPQEH (443 aa)) the chain is on the lumenal side. N-linked (GlcNAc...) asparagine glycans are attached at residues N100, N170, N228, N247, and N299. The helical transmembrane segment at 473–493 (MIAVYLPLLGPISAVMFFGFY) threads the bilayer. Residues 494-534 (NVMKEKNQKSKKNGTEREVAKEKLELKEAQKLHAIDGEDEL) are Cytoplasmic-facing.

It belongs to the PIGS family. In terms of assembly, forms a complex with CDC91, GPI16, GPI8 and GAA1. In terms of processing, N-glycosylated.

It localises to the endoplasmic reticulum membrane. The protein operates within glycolipid biosynthesis; glycosylphosphatidylinositol-anchor biosynthesis. In terms of biological role, component of the GPI transamidase complex. Involved in transfer of GPI to proteins. The polypeptide is GPI transamidase component GPI17 (GPI17) (Saccharomyces cerevisiae (strain ATCC 204508 / S288c) (Baker's yeast)).